Consider the following 103-residue polypeptide: Co-chaperonin GroES (103 aa).

This sequence belongs to the GroES chaperonin family. As to quaternary structure, heptamer of 7 subunits arranged in a ring. Interacts with the chaperonin GroEL.

Its subcellular location is the cytoplasm. Functionally, together with the chaperonin GroEL, plays an essential role in assisting protein folding. The GroEL-GroES system forms a nano-cage that allows encapsulation of the non-native substrate proteins and provides a physical environment optimized to promote and accelerate protein folding. GroES binds to the apical surface of the GroEL ring, thereby capping the opening of the GroEL channel. The sequence is that of Co-chaperonin GroES from Synechococcus sp. (strain CC9311).